We begin with the raw amino-acid sequence, 768 residues long: MKSITKIFLILGLFAFLLVAFAPSSSVATVNLESDGYTEAEAKLIEEKGEKFTFQTEVNKLMNIIINSLYSKKEIFLRELISNASDALDKIRFLALTNADLLGEGEQSNLDIHIKIDKANNVLHITDRGVGMTKDELVRNLGTIAQSGTKEFIKKVSDSAESSNLIGQFGVGFYSLFLVADSVVVTSKSNDDDQYVWTSDSQSSYTIAKDPKGNTLGRGTRISLHIKDDSKEFLDQEVIKQLVKKYSQFINFPIYLYVSEEVEIPKEEQEDSKPITDDQVEETTTTTEEGEEETTTEEEGQTEEKKTKTVYKWEELNDSKPLWMKAAKDVTKEEYTEFFRSLSKTQDTPITYSHFKTEGDTEFRSILYIPENPPSNMFDLEAAGSGLKLFVRRVFITDNLKELVPNWLRFLVGVIDSDDLPLNVSREMLQQNKILDAIKKKVILVKFISMIKELSEDEDKTKYNEFFKKFGSSMKLGAIEDQANKKRLTKYLLFPSSKEELTTFAGYVERMKEGQDQIYFITGKSKDSVEASPLIEQAIKKGYEVLFLVDPIDEYLVPQLDKFDDKYKFTNLARSGVKFNEDKEEEDQRKQTAEEFKPLLSYLKKTLSDKLEKVVISKVLADSPSILVSNSWGVTANQERIMKAQAHQANAQPQFNSKKIMEINPSHPLIKKLLNRLNEFGEEDETTKVSAHVLYETSALTAGYSIDNPTNFADFIYKLMMINGDSLAQTNFETTKNENSGPSVSFGDDDENQQQDFQQPPQSTHDEL.

The first 28 residues, 1-28, serve as a signal peptide directing secretion; the sequence is MKSITKIFLILGLFAFLLVAFAPSSSVA. Positions 83, 127, 140, and 173 each coordinate ATP. Asn83 carries an N-linked (GlcNAc...) asparagine glycan. Residues 266-276 are compositionally biased toward basic and acidic residues; that stretch reads KEEQEDSKPIT. The tract at residues 266-308 is disordered; it reads KEEQEDSKPITDDQVEETTTTTEEGEEETTTEEEGQTEEKKTK. A compositionally biased stretch (acidic residues) spans 288 to 301; sequence EEGEEETTTEEEGQ. 2 N-linked (GlcNAc...) asparagine glycosylation sites follow: Asn317 and Asn423. The segment covering 733–743 has biased composition (polar residues); the sequence is ETTKNENSGPS. Residues 733-768 are disordered; sequence ETTKNENSGPSVSFGDDDENQQQDFQQPPQSTHDEL. The Prevents secretion from ER signature appears at 765–768; the sequence is HDEL.

It belongs to the heat shock protein 90 family. Phosphorylated.

Its subcellular location is the endoplasmic reticulum. It localises to the golgi apparatus. Functionally, may play a role in late differentiation as well as in starvation response. When overexpressed, suppresses the ability to form normal fruiting bodies and impairs prespore differentiation as well as maturation into spores. The protein is Endoplasmin homolog (grp94) of Dictyostelium discoideum (Social amoeba).